The chain runs to 162 residues: Probable chemoreceptor glutamine deamidase CheD (162 aa).

Belongs to the CheD family.

It carries out the reaction L-glutaminyl-[protein] + H2O = L-glutamyl-[protein] + NH4(+). In terms of biological role, probably deamidates glutamine residues to glutamate on methyl-accepting chemotaxis receptors (MCPs), playing an important role in chemotaxis. This Clostridium botulinum (strain ATCC 19397 / Type A) protein is Probable chemoreceptor glutamine deamidase CheD.